Reading from the N-terminus, the 129-residue chain is Large ribosomal subunit protein uL22 (129 aa).

The protein belongs to the universal ribosomal protein uL22 family. Part of the 50S ribosomal subunit.

Functionally, this protein binds specifically to 23S rRNA; its binding is stimulated by other ribosomal proteins, e.g. L4, L17, and L20. It is important during the early stages of 50S assembly. It makes multiple contacts with different domains of the 23S rRNA in the assembled 50S subunit and ribosome. The globular domain of the protein is located near the polypeptide exit tunnel on the outside of the subunit, while an extended beta-hairpin is found that lines the wall of the exit tunnel in the center of the 70S ribosome. The sequence is that of Large ribosomal subunit protein uL22 from Bartonella quintana (strain Toulouse) (Rochalimaea quintana).